A 145-amino-acid polypeptide reads, in one-letter code: 3-hydroxyacyl-[acyl-carrier-protein] dehydratase FabZ (145 aa).

The active site involves H49.

It belongs to the thioester dehydratase family. FabZ subfamily.

Its subcellular location is the cytoplasm. It catalyses the reaction a (3R)-hydroxyacyl-[ACP] = a (2E)-enoyl-[ACP] + H2O. Involved in unsaturated fatty acids biosynthesis. Catalyzes the dehydration of short chain beta-hydroxyacyl-ACPs and long chain saturated and unsaturated beta-hydroxyacyl-ACPs. The sequence is that of 3-hydroxyacyl-[acyl-carrier-protein] dehydratase FabZ from Anaplasma phagocytophilum (strain HZ).